The primary structure comprises 618 residues: UvrABC system protein C (618 aa).

The GIY-YIG domain maps to 13 to 92; that stretch reads DKPGVYLMKN…IKKYRPKYNI (80 aa). Residues 204-239 form the UVR domain; the sequence is LDIVENFKLNMEKAAENLEFEKAAMLRDKINIIEKI.

The protein belongs to the UvrC family. In terms of assembly, interacts with UvrB in an incision complex.

The protein resides in the cytoplasm. The UvrABC repair system catalyzes the recognition and processing of DNA lesions. UvrC both incises the 5' and 3' sides of the lesion. The N-terminal half is responsible for the 3' incision and the C-terminal half is responsible for the 5' incision. The protein is UvrABC system protein C of Clostridium botulinum (strain Loch Maree / Type A3).